We begin with the raw amino-acid sequence, 891 residues long: von Willebrand factor A domain-containing protein 7 (891 aa).

A signal peptide spans 1–28 (MLPTEVPQSHPGPSALLLLQLLLPPTSA). Asn55 is a glycosylation site (N-linked (GlcNAc...) asparagine). The tract at residues 237 to 272 (PKPPGKCSHGGHFDRSSSQPPRGGINKDSTSPGFSP) is disordered. The region spanning 313–506 (ASSLSFVLDT…SMAALVTLPL (194 aa)) is the VWFA domain.

In terms of tissue distribution, expressed at low level in different cell lines.

Its subcellular location is the secreted. This Homo sapiens (Human) protein is von Willebrand factor A domain-containing protein 7 (VWA7).